We begin with the raw amino-acid sequence, 213 residues long: Phosphate-specific transport system accessory protein PhoU homolog 2 (213 aa).

It belongs to the PhoU family. Homodimer.

Its subcellular location is the cytoplasm. Functionally, plays a role in the regulation of phosphate uptake. In this role, it may bind, possibly as a chaperone, to PhoR, PhoP or a PhoR-PhoP complex to promote dephosphorylation of phospho-PhoP, or inhibit formation of the PhoR-PhoP transitory complex. The polypeptide is Phosphate-specific transport system accessory protein PhoU homolog 2 (phoU2) (Mycobacterium bovis (strain ATCC BAA-935 / AF2122/97)).